A 336-amino-acid chain; its full sequence is tRNA N6-adenosine threonylcarbamoyltransferase (336 aa).

Fe cation contacts are provided by His-114 and His-118. Residues Leu-136–Gly-140, Asp-169, Gly-182, Asp-186, and Asn-275 contribute to the substrate site. Asp-301 contributes to the Fe cation binding site.

The protein belongs to the KAE1 / TsaD family. Fe(2+) is required as a cofactor.

The protein resides in the cytoplasm. It catalyses the reaction L-threonylcarbamoyladenylate + adenosine(37) in tRNA = N(6)-L-threonylcarbamoyladenosine(37) in tRNA + AMP + H(+). Functionally, required for the formation of a threonylcarbamoyl group on adenosine at position 37 (t(6)A37) in tRNAs that read codons beginning with adenine. Is involved in the transfer of the threonylcarbamoyl moiety of threonylcarbamoyl-AMP (TC-AMP) to the N6 group of A37, together with TsaE and TsaB. TsaD likely plays a direct catalytic role in this reaction. This Streptococcus pneumoniae (strain ATCC 700669 / Spain 23F-1) protein is tRNA N6-adenosine threonylcarbamoyltransferase.